Here is a 520-residue protein sequence, read N- to C-terminus: Ribonuclease Y (520 aa).

A helical transmembrane segment spans residues 4-24 (VSGILLVLIGLLAGVGLGVLL). The region spanning 210-270 (TVSVVNLPNE…VRREVARVSL (61 aa)) is the KH domain. The region spanning 336–429 (VLQHSREVAF…VQAADALSGA (94 aa)) is the HD domain.

It belongs to the RNase Y family.

Its subcellular location is the cell membrane. In terms of biological role, endoribonuclease that initiates mRNA decay. The chain is Ribonuclease Y from Syntrophobacter fumaroxidans (strain DSM 10017 / MPOB).